The following is a 169-amino-acid chain: Large ribosomal subunit protein uL10 (169 aa).

The protein belongs to the universal ribosomal protein uL10 family. As to quaternary structure, part of the ribosomal stalk of the 50S ribosomal subunit. The N-terminus interacts with L11 and the large rRNA to form the base of the stalk. The C-terminus forms an elongated spine to which L12 dimers bind in a sequential fashion forming a multimeric L10(L12)X complex.

In terms of biological role, forms part of the ribosomal stalk, playing a central role in the interaction of the ribosome with GTP-bound translation factors. The sequence is that of Large ribosomal subunit protein uL10 from Orientia tsutsugamushi (strain Boryong) (Rickettsia tsutsugamushi).